Reading from the N-terminus, the 466-residue chain is 3-isopropylmalate dehydratase large subunit (466 aa).

[4Fe-4S] cluster-binding residues include Cys-347, Cys-407, and Cys-410.

The protein belongs to the aconitase/IPM isomerase family. LeuC type 1 subfamily. Heterodimer of LeuC and LeuD. [4Fe-4S] cluster is required as a cofactor.

It carries out the reaction (2R,3S)-3-isopropylmalate = (2S)-2-isopropylmalate. It participates in amino-acid biosynthesis; L-leucine biosynthesis; L-leucine from 3-methyl-2-oxobutanoate: step 2/4. In terms of biological role, catalyzes the isomerization between 2-isopropylmalate and 3-isopropylmalate, via the formation of 2-isopropylmaleate. The polypeptide is 3-isopropylmalate dehydratase large subunit (Shigella sonnei (strain Ss046)).